A 518-amino-acid chain; its full sequence is Cytochrome P450 CYP72A219 (518 aa).

The helical transmembrane segment at 2–22 (ELVLKLISSFCAIVVVILLGW) threads the bilayer. Cys465 contacts heme.

It belongs to the cytochrome P450 family. Heme serves as cofactor.

It localises to the membrane. Probable heme-thiolate monooxygenase. The sequence is that of Cytochrome P450 CYP72A219 from Panax ginseng (Korean ginseng).